A 1056-amino-acid polypeptide reads, in one-letter code: Contactin-5 (1056 aa).

The span at 1–14 (MKADSSSSSSMSSR) shows a compositional bias: low complexity. A disordered region spans residues 1 to 33 (MKADSSSSSSMSSRMRLRNSHGVGSSSQDWSPF). The span at 22 to 31 (GVGSSSQDWS) shows a compositional bias: polar residues. Ig-like C2-type domains lie at 57–142 (PVFI…IVLS), 154–240 (PFSG…RVLS), 258–343 (PKIE…GHLQ), 348–432 (PQWI…AELK), 438–519 (PMFN…AELT), and 527–622 (PMRV…AELL). 3 disulfide bridges follow: Cys-81/Cys-131, Cys-175/Cys-227, and Cys-280/Cys-327. Residues Asn-96 and Asn-119 are each glycosylated (N-linked (GlcNAc...) asparagine). Asn-355 carries N-linked (GlcNAc...) asparagine glycosylation. Intrachain disulfides connect Cys-369–Cys-416, Cys-459–Cys-507, and Cys-549–Cys-606. Asn-489 and Asn-496 each carry an N-linked (GlcNAc...) asparagine glycan. Fibronectin type-III domains lie at 629–727 (PPGV…TKEA), 732–829 (APAN…SAEG), 834–928 (PPSE…TKKN), and 933–1023 (PPGN…TSSG). A disordered region spans residues 711–736 (GTGDPSPPSRAVRTKEAVPSVAPANV). N-linked (GlcNAc...) asparagine glycosylation is found at Asn-772, Asn-887, Asn-945, and Asn-958. Asn-1035 carries GPI-anchor amidated asparagine lipidation. A propeptide spans 1036-1056 (SPPGLAWTALFLSLMVPSFPL) (removed in mature form).

The protein belongs to the immunoglobulin superfamily. Contactin family.

The protein resides in the cell membrane. Its function is as follows. Contactins mediate cell surface interactions during nervous system development. This is Contactin-5 (cntn5) from Danio rerio (Zebrafish).